A 91-amino-acid chain; its full sequence is Small ribosomal subunit protein bS16 (91 aa).

It belongs to the bacterial ribosomal protein bS16 family.

The chain is Small ribosomal subunit protein bS16 from Limosilactobacillus reuteri (strain DSM 20016) (Lactobacillus reuteri).